The following is a 215-amino-acid chain: Urease accessory protein UreG 2 (215 aa).

11–18 lines the GTP pocket; that stretch reads GPVGSGKT.

This sequence belongs to the SIMIBI class G3E GTPase family. UreG subfamily. In terms of assembly, homodimer. UreD, UreF and UreG form a complex that acts as a GTP-hydrolysis-dependent molecular chaperone, activating the urease apoprotein by helping to assemble the nickel containing metallocenter of UreC. The UreE protein probably delivers the nickel.

The protein resides in the cytoplasm. In terms of biological role, facilitates the functional incorporation of the urease nickel metallocenter. This process requires GTP hydrolysis, probably effectuated by UreG. The polypeptide is Urease accessory protein UreG 2 (Methylorubrum populi (strain ATCC BAA-705 / NCIMB 13946 / BJ001) (Methylobacterium populi)).